A 126-amino-acid polypeptide reads, in one-letter code: Protein LLP homolog (126 aa).

Positions 1 to 21 (MAKSLRSKWRRKMRAEKRKKV) are enriched in basic residues. Disordered stretches follow at residues 1-22 (MAKS…KKVA) and 53-126 (VPPE…RLAW). The span at 73–94 (DGGKMDLDTKRNKKTMLDEHGR) shows a compositional bias: basic and acidic residues. Residues 103-126 (QAKKLKAKRVGKNGKPKPKKRLAW) are compositionally biased toward basic residues.

Belongs to the learning-associated protein family.

It is found in the nucleus. The protein resides in the nucleolus. Its subcellular location is the chromosome. Regulates dendritic and spine growth and synaptic transmission. The protein is Protein LLP homolog (llph) of Danio rerio (Zebrafish).